Consider the following 426-residue polypeptide: Serine hydroxymethyltransferase (426 aa).

Residues L113 and 117–119 (GHL) contribute to the (6S)-5,6,7,8-tetrahydrofolate site. K222 is modified (N6-(pyridoxal phosphate)lysine). 363-365 (SAF) serves as a coordination point for (6S)-5,6,7,8-tetrahydrofolate.

Belongs to the SHMT family. In terms of assembly, homodimer. Pyridoxal 5'-phosphate is required as a cofactor.

Its subcellular location is the cytoplasm. The enzyme catalyses (6R)-5,10-methylene-5,6,7,8-tetrahydrofolate + glycine + H2O = (6S)-5,6,7,8-tetrahydrofolate + L-serine. It participates in one-carbon metabolism; tetrahydrofolate interconversion. Its pathway is amino-acid biosynthesis; glycine biosynthesis; glycine from L-serine: step 1/1. In terms of biological role, catalyzes the reversible interconversion of serine and glycine with tetrahydrofolate (THF) serving as the one-carbon carrier. This reaction serves as the major source of one-carbon groups required for the biosynthesis of purines, thymidylate, methionine, and other important biomolecules. Also exhibits THF-independent aldolase activity toward beta-hydroxyamino acids, producing glycine and aldehydes, via a retro-aldol mechanism. The sequence is that of Serine hydroxymethyltransferase from Phocaeicola vulgatus (strain ATCC 8482 / DSM 1447 / JCM 5826 / CCUG 4940 / NBRC 14291 / NCTC 11154) (Bacteroides vulgatus).